Reading from the N-terminus, the 185-residue chain is Elongation factor P (185 aa).

The protein belongs to the elongation factor P family.

It localises to the cytoplasm. It participates in protein biosynthesis; polypeptide chain elongation. Functionally, involved in peptide bond synthesis. Stimulates efficient translation and peptide-bond synthesis on native or reconstituted 70S ribosomes in vitro. Probably functions indirectly by altering the affinity of the ribosome for aminoacyl-tRNA, thus increasing their reactivity as acceptors for peptidyl transferase. This is Elongation factor P from Deinococcus radiodurans (strain ATCC 13939 / DSM 20539 / JCM 16871 / CCUG 27074 / LMG 4051 / NBRC 15346 / NCIMB 9279 / VKM B-1422 / R1).